The following is a 185-amino-acid chain: MVIGVLTLQGGFAEHIAILESLGVEHRRVRVPNDLLGLDGLIIPGGESTVMDKLARAFDLAEPLRAAINNGLPVFATCAGLIYLGTVENPAKGQQTLGCLDVVVRRNAFGRQVDSFDAVVDVEGIDANVAFIRAPEVISCGAGVTVTARVGDHVVGVRQGKIHAYAFHPESAGEVRLHQAWLASI.

Residue 46–48 coordinates L-glutamine; the sequence is GES. The active-site Nucleophile is the cysteine 78. L-glutamine contacts are provided by residues arginine 106 and 132-133; that span reads IR. Residues histidine 168 and glutamate 170 each act as charge relay system in the active site.

It belongs to the glutaminase PdxT/SNO family. As to quaternary structure, in the presence of PdxS, forms a dodecamer of heterodimers. Only shows activity in the heterodimer.

The enzyme catalyses aldehydo-D-ribose 5-phosphate + D-glyceraldehyde 3-phosphate + L-glutamine = pyridoxal 5'-phosphate + L-glutamate + phosphate + 3 H2O + H(+). The catalysed reaction is L-glutamine + H2O = L-glutamate + NH4(+). Its pathway is cofactor biosynthesis; pyridoxal 5'-phosphate biosynthesis. In terms of biological role, catalyzes the hydrolysis of glutamine to glutamate and ammonia as part of the biosynthesis of pyridoxal 5'-phosphate. The resulting ammonia molecule is channeled to the active site of PdxS. The sequence is that of Pyridoxal 5'-phosphate synthase subunit PdxT from Corynebacterium diphtheriae (strain ATCC 700971 / NCTC 13129 / Biotype gravis).